We begin with the raw amino-acid sequence, 185 residues long: Ribosome-recycling factor (185 aa).

It belongs to the RRF family.

Its subcellular location is the cytoplasm. Responsible for the release of ribosomes from messenger RNA at the termination of protein biosynthesis. May increase the efficiency of translation by recycling ribosomes from one round of translation to another. This is Ribosome-recycling factor from Mycobacteroides abscessus (strain ATCC 19977 / DSM 44196 / CCUG 20993 / CIP 104536 / JCM 13569 / NCTC 13031 / TMC 1543 / L948) (Mycobacterium abscessus).